We begin with the raw amino-acid sequence, 272 residues long: MQQQIIKELHVSQMVEPKEEIRKRVTFLKNYLKHSGAKGYVLGLSGGQDSTLAGKLAQMAIDELNEEEQDTSYVFIAVRLPYGVQKDEADAQDAIAFIKPSRSITVNIKDAVDASTKSFEQATGEVLSDFNKGNTKARERMKAQYDVGAHYGCLVIGTDHAAEAITGFFTKHGDGACDVAPLFGLTKRQGKSLLKELGAPTHLYTKAPTADLEDDRPGLPDEEALGLTYEQLDDYLEGKQVHDAIRKKIESRYLATEHKRQLPVTIFDSWWK.

Position 43–50 (Gly43–Ser50) interacts with ATP. Asp49 serves as a coordination point for Mg(2+). Arg138 provides a ligand contact to deamido-NAD(+). Thr158 provides a ligand contact to ATP. A Mg(2+)-binding site is contributed by Glu163. Positions 171 and 178 each coordinate deamido-NAD(+). Residues Lys187 and Thr209 each contribute to the ATP site. His258–Lys259 contacts deamido-NAD(+).

It belongs to the NAD synthetase family. Homodimer.

The catalysed reaction is deamido-NAD(+) + NH4(+) + ATP = AMP + diphosphate + NAD(+) + H(+). The protein operates within cofactor biosynthesis; NAD(+) biosynthesis; NAD(+) from deamido-NAD(+) (ammonia route): step 1/1. Catalyzes the ATP-dependent amidation of deamido-NAD to form NAD. Uses ammonia as a nitrogen source. The chain is NH(3)-dependent NAD(+) synthetase from Halalkalibacterium halodurans (strain ATCC BAA-125 / DSM 18197 / FERM 7344 / JCM 9153 / C-125) (Bacillus halodurans).